Here is a 338-residue protein sequence, read N- to C-terminus: MRIIGIETSCDETGIAIYDDEQGLLSHQLYSQVKLHADYGGVVPELASRDHVKKTIPLIKAALAEANLTSKDIDGVAYTAGPGLVGALLVGATIGRSIAYAWGVPAVPVHHMEGHLLAPMLEDNPPPFPFVALLVSGGHTMMVEVKGIGEYRILGESIDDAAGEAFDKTAKLMGLDYPGGPLLSRLAEKGTPGRFKFPRPMTDRPGLDMSFSGLKTFAANTIRANDNDDQTRADIAYAFQEAVCATLVIKCKRALVETGMKRIVIAGGVSANKQLRVELEALAKKIGGEVYYPRTEFCTDNGAMIAYAGMQRLKNGETADLSVHATPRWPIDQLEPIV.

Fe cation contacts are provided by H111 and H115. Residues 134-138, D167, G180, and N272 each bind substrate; that span reads LVSGG. D300 lines the Fe cation pocket.

It belongs to the KAE1 / TsaD family. Requires Fe(2+) as cofactor.

The protein resides in the cytoplasm. It catalyses the reaction L-threonylcarbamoyladenylate + adenosine(37) in tRNA = N(6)-L-threonylcarbamoyladenosine(37) in tRNA + AMP + H(+). Its function is as follows. Required for the formation of a threonylcarbamoyl group on adenosine at position 37 (t(6)A37) in tRNAs that read codons beginning with adenine. Is involved in the transfer of the threonylcarbamoyl moiety of threonylcarbamoyl-AMP (TC-AMP) to the N6 group of A37, together with TsaE and TsaB. TsaD likely plays a direct catalytic role in this reaction. The chain is tRNA N6-adenosine threonylcarbamoyltransferase from Vibrio atlanticus (strain LGP32) (Vibrio splendidus (strain Mel32)).